The sequence spans 281 residues: Lipoyl synthase (281 aa).

7 residues coordinate [4Fe-4S] cluster: Cys35, Cys40, Cys46, Cys61, Cys65, Cys68, and Ser274. The region spanning 47-263 is the Radical SAM core domain; sequence FGCGQATFLI…RDEALALGFR (217 aa).

Belongs to the radical SAM superfamily. Lipoyl synthase family. [4Fe-4S] cluster serves as cofactor.

It is found in the cytoplasm. The catalysed reaction is [[Fe-S] cluster scaffold protein carrying a second [4Fe-4S](2+) cluster] + N(6)-octanoyl-L-lysyl-[protein] + 2 oxidized [2Fe-2S]-[ferredoxin] + 2 S-adenosyl-L-methionine + 4 H(+) = [[Fe-S] cluster scaffold protein] + N(6)-[(R)-dihydrolipoyl]-L-lysyl-[protein] + 4 Fe(3+) + 2 hydrogen sulfide + 2 5'-deoxyadenosine + 2 L-methionine + 2 reduced [2Fe-2S]-[ferredoxin]. It participates in protein modification; protein lipoylation via endogenous pathway; protein N(6)-(lipoyl)lysine from octanoyl-[acyl-carrier-protein]: step 2/2. Catalyzes the radical-mediated insertion of two sulfur atoms into the C-6 and C-8 positions of the octanoyl moiety bound to the lipoyl domains of lipoate-dependent enzymes, thereby converting the octanoylated domains into lipoylated derivatives. In Trichlorobacter lovleyi (strain ATCC BAA-1151 / DSM 17278 / SZ) (Geobacter lovleyi), this protein is Lipoyl synthase.